The sequence spans 258 residues: Small ribosomal subunit protein uS2 (258 aa).

Residues Glu234–Gln258 are disordered. Low complexity predominate over residues Ala236–Gln258.

This sequence belongs to the universal ribosomal protein uS2 family.

The protein is Small ribosomal subunit protein uS2 of Desulfovibrio desulfuricans (strain ATCC 27774 / DSM 6949 / MB).